A 733-amino-acid chain; its full sequence is Submandibular gland protein C (733 aa).

The N-terminal stretch at 1–20 (MKLILLYLAVVLCFVGKARS) is a signal peptide. Residues 48 to 91 (KSSGGSKDYNLSDGGKSNSRKNLSPATGGSATQQSNLDDSHAPN) form a disordered region. N-linked (GlcNAc...) asparagine glycosylation occurs at Asn57. Polar residues predominate over residues 62-84 (GKSNSRKNLSPATGGSATQQSNL). Asn141 and Asn187 each carry an N-linked (GlcNAc...) asparagine glycan. Disordered stretches follow at residues 172 to 204 (GQQA…ADKP), 249 to 330 (LTED…NSSN), 369 to 450 (LTED…NSSN), and 496 to 733 (SVTE…PSVA). Residues 186-199 (ENSSLSTGSATSNK) are compositionally biased toward polar residues. The segment covering 256 to 270 (TSTSASVSGDSSTSS) has biased composition (low complexity). The span at 300–318 (GSKQNVEDSTLSTGSATSN) shows a compositional bias: polar residues. N-linked (GlcNAc...) asparagine glycosylation is present at Asn327. The segment covering 376–390 (TSTSASVSGDSSTSS) has biased composition (low complexity). The span at 420-438 (GSKQNVEDSTLSTGSATSN) shows a compositional bias: polar residues. N-linked (GlcNAc...) asparagine glycosylation is found at Asn447, Asn514, and Asn528. Composition is skewed to polar residues over residues 496–516 (SVTE…NNLS) and 525–535 (NPTNGSSSASS). Over residues 538–552 (KPYEEGMRKLLKFLE) the composition is skewed to basic and acidic residues. Low complexity-rich tracts occupy residues 563-574 (SVSGMSSESSRS) and 609-619 (SSNSSTGSATS). Asn611 carries N-linked (GlcNAc...) asparagine glycosylation. Positions 654–665 (GFNGPEGVGENN) are enriched in gly residues. Positions 677–701 (GSKSDSGSHNLSSGSGSRSNVSTGG) are enriched in low complexity. 2 N-linked (GlcNAc...) asparagine glycosylation sites follow: Asn686 and Asn696. Polar residues predominate over residues 722-733 (TGKTQSGSPSVA).

In terms of processing, N-glycosylated. In terms of tissue distribution, detected in terminal tubule cells of the submandibular gland (at protein level). Expressed in submandibular salivary glands of 3-day-old males but not adults. Expression in adult submandibular glands is restricted to females. Isoform 5 is expressed in both 3-day-old and adult sublingual glands.

It localises to the secreted. This Mus musculus (Mouse) protein is Submandibular gland protein C (Muc19).